A 437-amino-acid chain; its full sequence is Citrate synthase (437 aa).

Catalysis depends on residues His-316 and Asp-372.

This sequence belongs to the citrate synthase family. As to quaternary structure, homohexamer.

The catalysed reaction is oxaloacetate + acetyl-CoA + H2O = citrate + CoA + H(+). The protein operates within carbohydrate metabolism; tricarboxylic acid cycle; isocitrate from oxaloacetate: step 1/2. With respect to regulation, weakly inhibited by ATP (apparent Ki = 10 mm). This is Citrate synthase (gltA) from Corynebacterium glutamicum (strain ATCC 13032 / DSM 20300 / JCM 1318 / BCRC 11384 / CCUG 27702 / LMG 3730 / NBRC 12168 / NCIMB 10025 / NRRL B-2784 / 534).